The chain runs to 779 residues: Endonuclease MutS2 (779 aa).

328-335 provides a ligand contact to ATP; sequence GPNTGGKT. In terms of domain architecture, Smr spans 704 to 779; that stretch reads LDLRGKRYEE…GSGATIVTLG (76 aa).

Belongs to the DNA mismatch repair MutS family. MutS2 subfamily. As to quaternary structure, homodimer. Binds to stalled ribosomes, contacting rRNA.

Endonuclease that is involved in the suppression of homologous recombination and thus may have a key role in the control of bacterial genetic diversity. Functionally, acts as a ribosome collision sensor, splitting the ribosome into its 2 subunits. Detects stalled/collided 70S ribosomes which it binds and splits by an ATP-hydrolysis driven conformational change. Acts upstream of the ribosome quality control system (RQC), a ribosome-associated complex that mediates the extraction of incompletely synthesized nascent chains from stalled ribosomes and their subsequent degradation. Probably generates substrates for RQC. The protein is Endonuclease MutS2 of Streptococcus pyogenes serotype M5 (strain Manfredo).